The primary structure comprises 400 residues: Enoyl-[acyl-carrier-protein] reductase [NADH] (400 aa).

Residues Gly-48 to Tyr-53, Phe-74 to Glu-75, Asp-111 to Ala-112, and Leu-139 to Ala-140 contribute to the NAD(+) site. Substrate is bound at residue Tyr-225. Tyr-235 serves as the catalytic Proton donor. Residues Lys-244 and Val-273–Thr-275 each bind NAD(+).

This sequence belongs to the TER reductase family. In terms of assembly, monomer.

It catalyses the reaction a 2,3-saturated acyl-[ACP] + NAD(+) = a (2E)-enoyl-[ACP] + NADH + H(+). It functions in the pathway lipid metabolism; fatty acid biosynthesis. Functionally, involved in the final reduction of the elongation cycle of fatty acid synthesis (FAS II). Catalyzes the reduction of a carbon-carbon double bond in an enoyl moiety that is covalently linked to an acyl carrier protein (ACP). This Marinomonas sp. (strain MWYL1) protein is Enoyl-[acyl-carrier-protein] reductase [NADH].